We begin with the raw amino-acid sequence, 927 residues long: DNA polymerase alpha-binding protein (927 aa).

WD repeat units follow at residues 10 to 49, 134 to 173, 227 to 266, and 273 to 313; these read FDFG…EEPE, KIDE…PNKV, AANR…LQKT, and STKA…IHYT. Phosphoserine occurs at positions 377, 379, and 398. Phosphothreonine occurs at positions 401 and 411. Ser-463 carries the post-translational modification Phosphoserine. The WD 5 repeat unit spans residues 699-739; that stretch reads GSDNTLLLLSKWRSPEESKWLPILDSNMEIWKMSGGKETTD.

It is found in the nucleus. Functionally, accessory factor for DNA replication. It plays a role in accurately duplicating the genome in vivo. This Saccharomyces cerevisiae (strain ATCC 204508 / S288c) (Baker's yeast) protein is DNA polymerase alpha-binding protein (CTF4).